The chain runs to 469 residues: Serine carboxypeptidase-like 41 (469 aa).

The signal sequence occupies residues 1 to 20 (MAIVSLRDVAMVMVTVQVFA). Cystine bridges form between Cys-83–Cys-342, Cys-243–Cys-260, and Cys-285–Cys-310. A glycan (N-linked (GlcNAc...) asparagine) is linked at Asn-134. Ser-175 is a catalytic residue. The N-linked (GlcNAc...) asparagine glycan is linked to Asn-255. N-linked (GlcNAc...) asparagine glycans are attached at residues Asn-331 and Asn-347. Active-site residues include Asp-379 and His-436. An N-linked (GlcNAc...) asparagine glycan is attached at Asn-461.

Belongs to the peptidase S10 family. Expressed in flowers.

Its subcellular location is the secreted. Its function is as follows. Probable carboxypeptidase. The polypeptide is Serine carboxypeptidase-like 41 (SCPL41) (Arabidopsis thaliana (Mouse-ear cress)).